Here is a 339-residue protein sequence, read N- to C-terminus: Ribonucleoside-diphosphate reductase subunit beta (339 aa).

2 residues coordinate Fe cation: D87 and H121. The active site involves Y125. Residue H215 coordinates Fe cation.

It belongs to the ribonucleoside diphosphate reductase small chain family. In terms of assembly, tetramer of two alpha and two beta subunits. It depends on Fe cation as a cofactor.

The catalysed reaction is a 2'-deoxyribonucleoside 5'-diphosphate + [thioredoxin]-disulfide + H2O = a ribonucleoside 5'-diphosphate + [thioredoxin]-dithiol. Its function is as follows. Provides the precursors necessary for DNA synthesis. Catalyzes the biosynthesis of deoxyribonucleotides from the corresponding ribonucleotides. The chain is Ribonucleoside-diphosphate reductase subunit beta (nrdF) from Mycoplasma pneumoniae (strain ATCC 29342 / M129 / Subtype 1) (Mycoplasmoides pneumoniae).